We begin with the raw amino-acid sequence, 371 residues long: 4-hydroxy-3-methylbut-2-en-1-yl diphosphate synthase (flavodoxin) (371 aa).

Positions 270, 273, 305, and 312 each coordinate [4Fe-4S] cluster.

The protein belongs to the IspG family. The cofactor is [4Fe-4S] cluster.

The enzyme catalyses (2E)-4-hydroxy-3-methylbut-2-enyl diphosphate + oxidized [flavodoxin] + H2O + 2 H(+) = 2-C-methyl-D-erythritol 2,4-cyclic diphosphate + reduced [flavodoxin]. Its pathway is isoprenoid biosynthesis; isopentenyl diphosphate biosynthesis via DXP pathway; isopentenyl diphosphate from 1-deoxy-D-xylulose 5-phosphate: step 5/6. Its function is as follows. Converts 2C-methyl-D-erythritol 2,4-cyclodiphosphate (ME-2,4cPP) into 1-hydroxy-2-methyl-2-(E)-butenyl 4-diphosphate. This Shewanella loihica (strain ATCC BAA-1088 / PV-4) protein is 4-hydroxy-3-methylbut-2-en-1-yl diphosphate synthase (flavodoxin).